The sequence spans 302 residues: AT-hook motif nuclear-localized protein 29 (302 aa).

The segment at 1-95 (MDGGYDQSGG…KPPVIVTRDS (95 aa)) is disordered. Pro residues predominate over residues 32–44 (QLHPLPQPQPQPQ). Positions 72–84 (KRPRGRPPGSKNK) form a DNA-binding region, a.T hook. In terms of domain architecture, PPC spans 96 to 241 (PNVLRSHVLE…DEGGEGGEGG (146 aa)). Residues 164-169 (GRFEIL) form a required for the binding to non-AHL interactors region. The disordered stretch occupies residues 229–279 (PLEDEGGEGGEGGEVGEGGGGEGGPPPATSSSPPSGAGQGQLRGNMSGYDQ). Residues 237-251 (GGEGGEVGEGGGGEG) are compositionally biased toward gly residues.

Homodimer. Interacts with AHL5, AHL12, AHL25, AHL27, TCP4, TCP13 and EF114. As to expression, expressed in the hypocotyl and the vascular tissue of seedling.

The protein localises to the nucleus. In terms of biological role, transcription factor that specifically binds AT-rich DNA sequences related to the nuclear matrix attachment regions (MARs). Acts redundantly with AHL18, AHL22 and AHL27 in the regulation of flowering and regulation of the hypocotyl elongation. Acts redundantly with AHL27/ESC to modulate hypocotyl growth inhibition in response to light. In Arabidopsis thaliana (Mouse-ear cress), this protein is AT-hook motif nuclear-localized protein 29.